Reading from the N-terminus, the 554-residue chain is Inactive sesquithujene synthase (554 aa).

Mg(2+)-binding residues include Asp-308 and Asp-312. Substrate contacts are provided by Asp-308, Asp-312, Arg-449, and Asn-452. Positions 308–312 (DDMFD) match the DDXXD motif motif. The Mg(2+) site is built by Asn-452, Ser-456, and Glu-460.

The protein belongs to the terpene synthase family. In terms of assembly, monomer. The cofactor is Mg(2+). Mn(2+) serves as cofactor.

It is found in the cytoplasm. It participates in secondary metabolite biosynthesis; terpenoid biosynthesis. Non-functional sesquiterpene synthase having less than 1% of the activity found in cv. Delprim. This is Inactive sesquithujene synthase from Zea mays (Maize).